Reading from the N-terminus, the 184-residue chain is MREYKLVVLGSRGVGKSALTVQFVQGIFVEKYDPTIEDSYREQVEVDAQQCMLEILDTAGTEQFTAMRDLYMKNGQGFALVYSITAQSTFNDLQDLREQILRVKDTDDVPMILVGNKCDLEDERVVGKEQGQNLARQWNNCAFLESSAKSKINVNEIFYDLVRQINRKTPVPGKARKKSSCQLL.

GTP is bound at residue 10–18 (GSRGVGKSA). An Effector region motif is present at residues 32 to 40 (YDPTIEDSY). GTP contacts are provided by residues 57–61 (DTAGT), 116–119 (NKCD), and 147–149 (SAK). Cys-181 is lipidated: S-geranylgeranyl cysteine. A propeptide spans 182 to 184 (QLL) (removed in mature form).

Belongs to the small GTPase superfamily. Ras family.

It localises to the cell membrane. The protein resides in the cytoplasm. The protein localises to the cytosol. It carries out the reaction GTP + H2O = GDP + phosphate + H(+). In terms of biological role, probable GTP-binding protein with intrinsic GTPase activity. The sequence is that of Ras-related protein Rap-1b-like protein from Homo sapiens (Human).